The sequence spans 208 residues: LexA repressor (208 aa).

Positions 28–48 (RAEIARQLGFRSANAAEEHLK) form a DNA-binding region, H-T-H motif. Catalysis depends on for autocatalytic cleavage activity residues Ser-125 and Lys-162.

This sequence belongs to the peptidase S24 family. As to quaternary structure, homodimer.

It carries out the reaction Hydrolysis of Ala-|-Gly bond in repressor LexA.. In terms of biological role, represses a number of genes involved in the response to DNA damage (SOS response), including recA and lexA. In the presence of single-stranded DNA, RecA interacts with LexA causing an autocatalytic cleavage which disrupts the DNA-binding part of LexA, leading to derepression of the SOS regulon and eventually DNA repair. The polypeptide is LexA repressor (Alteromonas mediterranea (strain DSM 17117 / CIP 110805 / LMG 28347 / Deep ecotype)).